An 882-amino-acid chain; its full sequence is Alanine--tRNA ligase (882 aa).

Zn(2+) contacts are provided by H563, H567, C665, and H669.

This sequence belongs to the class-II aminoacyl-tRNA synthetase family. The cofactor is Zn(2+).

The protein localises to the cytoplasm. It carries out the reaction tRNA(Ala) + L-alanine + ATP = L-alanyl-tRNA(Ala) + AMP + diphosphate. Its function is as follows. Catalyzes the attachment of alanine to tRNA(Ala) in a two-step reaction: alanine is first activated by ATP to form Ala-AMP and then transferred to the acceptor end of tRNA(Ala). Also edits incorrectly charged Ser-tRNA(Ala) and Gly-tRNA(Ala) via its editing domain. This Synechococcus sp. (strain RCC307) protein is Alanine--tRNA ligase.